The sequence spans 373 residues: 3-dehydroquinate synthase (373 aa).

NAD(+)-binding positions include 74-79 (DAEAGK), 108-112 (GAATD), 132-133 (TT), lysine 145, lysine 154, and 172-175 (TLET). Zn(2+)-binding residues include glutamate 187, histidine 250, and histidine 266.

It belongs to the sugar phosphate cyclases superfamily. Dehydroquinate synthase family. The cofactor is Co(2+). Zn(2+) is required as a cofactor. NAD(+) serves as cofactor.

The protein localises to the cytoplasm. The catalysed reaction is 7-phospho-2-dehydro-3-deoxy-D-arabino-heptonate = 3-dehydroquinate + phosphate. It participates in metabolic intermediate biosynthesis; chorismate biosynthesis; chorismate from D-erythrose 4-phosphate and phosphoenolpyruvate: step 2/7. Catalyzes the conversion of 3-deoxy-D-arabino-heptulosonate 7-phosphate (DAHP) to dehydroquinate (DHQ). This is 3-dehydroquinate synthase from Nocardia farcinica (strain IFM 10152).